The chain runs to 289 residues: Oxaloacetate decarboxylase 1 (289 aa).

A substrate-binding site is contributed by Ser50. Residue Asp88 participates in Mg(2+) binding. The substrate site is built by Arg159 and His235.

The protein belongs to the isocitrate lyase/PEP mutase superfamily. Oxaloacetate decarboxylase family. Homotetramer; dimer of dimers. Mg(2+) is required as a cofactor.

The catalysed reaction is oxaloacetate + H(+) = pyruvate + CO2. Its function is as follows. Catalyzes the decarboxylation of oxaloacetate into pyruvate. Seems to play a role in maintaining cellular concentrations of bicarbonate and pyruvate. In Pseudomonas putida (strain W619), this protein is Oxaloacetate decarboxylase 1.